The following is a 209-amino-acid chain: Ribosomal RNA large subunit methyltransferase E (209 aa).

Positions 60, 62, 80, 96, and 121 each coordinate S-adenosyl-L-methionine. Lys-161 functions as the Proton acceptor in the catalytic mechanism. The span at 182 to 196 (VQMRKPSSSRDRSRE) shows a compositional bias: basic and acidic residues. A disordered region spans residues 182–209 (VQMRKPSSSRDRSREQYLLGRGFRGRSE).

The protein belongs to the class I-like SAM-binding methyltransferase superfamily. RNA methyltransferase RlmE family.

The protein localises to the cytoplasm. It catalyses the reaction uridine(2552) in 23S rRNA + S-adenosyl-L-methionine = 2'-O-methyluridine(2552) in 23S rRNA + S-adenosyl-L-homocysteine + H(+). In terms of biological role, specifically methylates the uridine in position 2552 of 23S rRNA at the 2'-O position of the ribose in the fully assembled 50S ribosomal subunit. The sequence is that of Ribosomal RNA large subunit methyltransferase E from Pseudomonas fluorescens (strain ATCC BAA-477 / NRRL B-23932 / Pf-5).